The primary structure comprises 364 residues: Anhydro-N-acetylmuramic acid kinase (364 aa).

11–18 is an ATP binding site; sequence GSSLDGID.

Belongs to the anhydro-N-acetylmuramic acid kinase family.

It catalyses the reaction 1,6-anhydro-N-acetyl-beta-muramate + ATP + H2O = N-acetyl-D-muramate 6-phosphate + ADP + H(+). Its pathway is amino-sugar metabolism; 1,6-anhydro-N-acetylmuramate degradation. The protein operates within cell wall biogenesis; peptidoglycan recycling. Its function is as follows. Catalyzes the specific phosphorylation of 1,6-anhydro-N-acetylmuramic acid (anhMurNAc) with the simultaneous cleavage of the 1,6-anhydro ring, generating MurNAc-6-P. Is required for the utilization of anhMurNAc either imported from the medium or derived from its own cell wall murein, and thus plays a role in cell wall recycling. This Pseudomonas savastanoi pv. phaseolicola (strain 1448A / Race 6) (Pseudomonas syringae pv. phaseolicola (strain 1448A / Race 6)) protein is Anhydro-N-acetylmuramic acid kinase.